Reading from the N-terminus, the 379-residue chain is Succinyl-diaminopimelate desuccinylase (379 aa).

Histidine 70 is a binding site for Zn(2+). Aspartate 72 is an active-site residue. Aspartate 103 lines the Zn(2+) pocket. The active-site Proton acceptor is the glutamate 137. Zn(2+)-binding residues include glutamate 138, glutamate 166, and histidine 352.

It belongs to the peptidase M20A family. DapE subfamily. As to quaternary structure, homodimer. Requires Zn(2+) as cofactor. It depends on Co(2+) as a cofactor.

It carries out the reaction N-succinyl-(2S,6S)-2,6-diaminopimelate + H2O = (2S,6S)-2,6-diaminopimelate + succinate. It functions in the pathway amino-acid biosynthesis; L-lysine biosynthesis via DAP pathway; LL-2,6-diaminopimelate from (S)-tetrahydrodipicolinate (succinylase route): step 3/3. Catalyzes the hydrolysis of N-succinyl-L,L-diaminopimelic acid (SDAP), forming succinate and LL-2,6-diaminopimelate (DAP), an intermediate involved in the bacterial biosynthesis of lysine and meso-diaminopimelic acid, an essential component of bacterial cell walls. In Burkholderia multivorans (strain ATCC 17616 / 249), this protein is Succinyl-diaminopimelate desuccinylase.